A 78-amino-acid chain; its full sequence is Translational regulator CsrA (78 aa).

This sequence belongs to the CsrA/RsmA family. In terms of assembly, homodimer; the beta-strands of each monomer intercalate to form a hydrophobic core, while the alpha-helices form wings that extend away from the core.

The protein resides in the cytoplasm. In terms of biological role, a translational regulator that binds mRNA to regulate translation initiation and/or mRNA stability. Usually binds in the 5'-UTR at or near the Shine-Dalgarno sequence preventing ribosome-binding, thus repressing translation. Its main target seems to be the major flagellin gene, while its function is anatagonized by FliW. The sequence is that of Translational regulator CsrA from Caldicellulosiruptor bescii (strain ATCC BAA-1888 / DSM 6725 / KCTC 15123 / Z-1320) (Anaerocellum thermophilum).